The sequence spans 213 residues: Outer-membrane lipoprotein LolB (213 aa).

A signal peptide spans 1-24; it reads MNNLSYFTKTKLVWVILSLSLLSA. The N-palmitoyl cysteine moiety is linked to residue cysteine 25. Cysteine 25 is lipidated: S-diacylglycerol cysteine.

Belongs to the LolB family. As to quaternary structure, monomer.

The protein resides in the cell outer membrane. Plays a critical role in the incorporation of lipoproteins in the outer membrane after they are released by the LolA protein. The polypeptide is Outer-membrane lipoprotein LolB (Shewanella woodyi (strain ATCC 51908 / MS32)).